The following is a 234-amino-acid chain: Phosphoribosylaminoimidazole-succinocarboxamide synthase (234 aa).

It belongs to the SAICAR synthetase family.

The enzyme catalyses 5-amino-1-(5-phospho-D-ribosyl)imidazole-4-carboxylate + L-aspartate + ATP = (2S)-2-[5-amino-1-(5-phospho-beta-D-ribosyl)imidazole-4-carboxamido]succinate + ADP + phosphate + 2 H(+). The protein operates within purine metabolism; IMP biosynthesis via de novo pathway; 5-amino-1-(5-phospho-D-ribosyl)imidazole-4-carboxamide from 5-amino-1-(5-phospho-D-ribosyl)imidazole-4-carboxylate: step 1/2. This is Phosphoribosylaminoimidazole-succinocarboxamide synthase from Exiguobacterium sp. (strain ATCC BAA-1283 / AT1b).